We begin with the raw amino-acid sequence, 284 residues long: Bifunctional protein FolD 1 (284 aa).

NADP(+)-binding positions include 166–168 (GAS), serine 191, and isoleucine 232.

The protein belongs to the tetrahydrofolate dehydrogenase/cyclohydrolase family. As to quaternary structure, homodimer.

It carries out the reaction (6R)-5,10-methylene-5,6,7,8-tetrahydrofolate + NADP(+) = (6R)-5,10-methenyltetrahydrofolate + NADPH. It catalyses the reaction (6R)-5,10-methenyltetrahydrofolate + H2O = (6R)-10-formyltetrahydrofolate + H(+). The protein operates within one-carbon metabolism; tetrahydrofolate interconversion. Catalyzes the oxidation of 5,10-methylenetetrahydrofolate to 5,10-methenyltetrahydrofolate and then the hydrolysis of 5,10-methenyltetrahydrofolate to 10-formyltetrahydrofolate. This Hydrogenovibrio crunogenus (strain DSM 25203 / XCL-2) (Thiomicrospira crunogena) protein is Bifunctional protein FolD 1.